A 246-amino-acid polypeptide reads, in one-letter code: Sulfate transporter CysZ (246 aa).

4 helical membrane-spanning segments follow: residues 24-44 (LFVL…IGFA), 69-89 (IVWP…FTMV), 148-168 (LLVL…WILF), and 214-234 (LLIP…ATLF).

This sequence belongs to the CysZ family.

It is found in the cell inner membrane. Functionally, high affinity, high specificity proton-dependent sulfate transporter, which mediates sulfate uptake. Provides the sulfur source for the cysteine synthesis pathway. The sequence is that of Sulfate transporter CysZ from Pseudomonas aeruginosa (strain ATCC 15692 / DSM 22644 / CIP 104116 / JCM 14847 / LMG 12228 / 1C / PRS 101 / PAO1).